The chain runs to 217 residues: Ribonuclease HII (217 aa).

Residues 27–216 enclose the RNase H type-2 domain; it reads SRIAGVDEAG…VKESIREGIC (190 aa). The a divalent metal cation site is built by D33, E34, and D126.

This sequence belongs to the RNase HII family. Requires Mn(2+) as cofactor. Mg(2+) serves as cofactor.

It is found in the cytoplasm. The catalysed reaction is Endonucleolytic cleavage to 5'-phosphomonoester.. Its function is as follows. Endonuclease that specifically degrades the RNA of RNA-DNA hybrids. The polypeptide is Ribonuclease HII (rnhB) (Chlamydia muridarum (strain MoPn / Nigg)).